The primary structure comprises 350 residues: Inositol 2-dehydrogenase/D-chiro-inositol 3-dehydrogenase (350 aa).

The protein belongs to the Gfo/Idh/MocA family. In terms of assembly, homotetramer.

The enzyme catalyses myo-inositol + NAD(+) = scyllo-inosose + NADH + H(+). It carries out the reaction 1D-chiro-inositol + NAD(+) = scyllo-inosine + NADH + H(+). The protein operates within polyol metabolism; myo-inositol degradation into acetyl-CoA; acetyl-CoA from myo-inositol: step 1/7. Involved in the oxidation of myo-inositol (MI) and D-chiro-inositol (DCI) to 2-keto-myo-inositol (2KMI or 2-inosose) and 1-keto-D-chiro-inositol (1KDCI), respectively. The polypeptide is Inositol 2-dehydrogenase/D-chiro-inositol 3-dehydrogenase (Lactiplantibacillus plantarum (strain ATCC BAA-793 / NCIMB 8826 / WCFS1) (Lactobacillus plantarum)).